The following is a 142-amino-acid chain: HTH-type transcriptional regulator MntR (142 aa).

Positions M1–T63 constitute an HTH dtxR-type domain. Mn(2+)-binding residues include D8, E11, H77, E99, E102, and H103.

It belongs to the DtxR/MntR family. As to quaternary structure, homodimer.

The protein resides in the cytoplasm. DNA binding is strongly activated by Mn(2+). Functionally, central regulator of manganese homeostasis. This Listeria monocytogenes serotype 4b (strain F2365) protein is HTH-type transcriptional regulator MntR.